Reading from the N-terminus, the 142-residue chain is Hemoglobin subunit alpha-A (142 aa).

Residues Val2–Arg142 enclose the Globin domain. Residue His59 participates in O2 binding. His88 provides a ligand contact to heme b.

Belongs to the globin family. As to quaternary structure, heterotetramer of two alpha chains and two beta chains. Red blood cells.

In terms of biological role, involved in oxygen transport from the lung to the various peripheral tissues. In Anseranas semipalmata (Magpie goose), this protein is Hemoglobin subunit alpha-A (HBAA).